A 316-amino-acid polypeptide reads, in one-letter code: Beta-ketoacyl-[acyl-carrier-protein] synthase III 1 (316 aa).

Catalysis depends on residues Cys-112 and His-243. Residues 244-248 (QANYR) form an ACP-binding region. Residue Asn-273 is part of the active site.

Belongs to the thiolase-like superfamily. FabH family. Homodimer.

The protein localises to the cytoplasm. The enzyme catalyses malonyl-[ACP] + acetyl-CoA + H(+) = 3-oxobutanoyl-[ACP] + CO2 + CoA. The protein operates within lipid metabolism; fatty acid biosynthesis. Functionally, catalyzes the condensation reaction of fatty acid synthesis by the addition to an acyl acceptor of two carbons from malonyl-ACP. Catalyzes the first condensation reaction which initiates fatty acid synthesis and may therefore play a role in governing the total rate of fatty acid production. Possesses both acetoacetyl-ACP synthase and acetyl transacylase activities. Its substrate specificity determines the biosynthesis of branched-chain and/or straight-chain of fatty acids. The sequence is that of Beta-ketoacyl-[acyl-carrier-protein] synthase III 1 from Vibrio vulnificus (strain YJ016).